The primary structure comprises 341 residues: Zinc transporter ZIP11 (341 aa).

A run of 7 helical transmembrane segments spans residues 12–32, 44–64, 72–92, 193–213, 262–284, 289–306, and 321–341; these read LLGT…VFVF, LGFA…APAV, GFGS…AAFV, IALL…AVGV, FWYG…FAVV, ILPY…YVIM, and LASW…VGLG.

Belongs to the ZIP transporter (TC 2.A.5) family.

It localises to the cell membrane. It is found in the nucleus. The protein localises to the cytoplasm. Its subcellular location is the golgi apparatus. The catalysed reaction is Zn(2+)(in) = Zn(2+)(out). The enzyme catalyses Cu(2+)(in) = Cu(2+)(out). Zinc importer that regulates cytosolic zinc concentrations either via zinc influx from the extracellular compartment or efflux from intracellular organelles such as Golgi apparatus. May transport copper ions as well. The transport mechanism remains to be elucidated. This Bos taurus (Bovine) protein is Zinc transporter ZIP11 (SLC39A11).